Here is a 415-residue protein sequence, read N- to C-terminus: Serine hydroxymethyltransferase 1 (415 aa).

(6S)-5,6,7,8-tetrahydrofolate-binding positions include leucine 122 and 126–128 (GHL). Residue lysine 230 is modified to N6-(pyridoxal phosphate)lysine.

It belongs to the SHMT family. Homodimer. Requires pyridoxal 5'-phosphate as cofactor.

The protein resides in the cytoplasm. It catalyses the reaction (6R)-5,10-methylene-5,6,7,8-tetrahydrofolate + glycine + H2O = (6S)-5,6,7,8-tetrahydrofolate + L-serine. It functions in the pathway one-carbon metabolism; tetrahydrofolate interconversion. Its pathway is amino-acid biosynthesis; glycine biosynthesis; glycine from L-serine: step 1/1. Functionally, catalyzes the reversible interconversion of serine and glycine with tetrahydrofolate (THF) serving as the one-carbon carrier. This reaction serves as the major source of one-carbon groups required for the biosynthesis of purines, thymidylate, methionine, and other important biomolecules. Also exhibits THF-independent aldolase activity toward beta-hydroxyamino acids, producing glycine and aldehydes, via a retro-aldol mechanism. The polypeptide is Serine hydroxymethyltransferase 1 (Cupriavidus pinatubonensis (strain JMP 134 / LMG 1197) (Cupriavidus necator (strain JMP 134))).